The chain runs to 175 residues: Alpha-crystallin B chain (175 aa).

Residue Met-1 is modified to N-acetylmethionine. Position 19 is a phosphoserine (Ser-19). Ser-41 carries O-linked (GlcNAc) serine glycosylation. Phosphoserine is present on residues Ser-45 and Ser-59. The sHSP domain occupies 56 to 164 (RAPSWIDTGL…PERTIPITRE (109 aa)). His-83 is a binding site for Zn(2+). Residue Lys-92 is modified to N6-acetyllysine. Zn(2+) contacts are provided by His-104, Glu-106, His-111, and His-119. The interval 142-175 (VLTVNGPRKQASGPERTIPITREEKPAVTAAPKK) is disordered. Lys-166 carries the post-translational modification N6-acetyllysine. Residue Thr-170 is glycosylated (O-linked (GlcNAc) threonine).

This sequence belongs to the small heat shock protein (HSP20) family. In terms of assembly, heteromer composed of three CRYAA and one CRYAB subunits. Aggregates with homologous proteins, including the small heat shock protein HSPB1, to form large heteromeric complexes. Inter-subunit bridging via zinc ions enhances stability, which is crucial as there is no protein turn over in the lens. Interacts with HSPBAP1 and TTN/titin. Interacts with TMEM109; in the cellular response to DNA damage. Interacts with DES; binds rapidly during early stages of DES filament assembly and a reduced binding seen in the later stages. Interacts with ATP6V1A and with MTOR, forming a ternary complex. In terms of tissue distribution, lens as well as other tissues.

It is found in the cytoplasm. Its subcellular location is the nucleus. The protein localises to the secreted. It localises to the lysosome. Functionally, may contribute to the transparency and refractive index of the lens. Has chaperone-like activity, preventing aggregation of various proteins under a wide range of stress conditions. In lens epithelial cells, stabilizes the ATP6V1A protein, preventing its degradation by the proteasome. This is Alpha-crystallin B chain (CRYAB) from Spalax judaei (Judean Mountains blind mole rat).